A 422-amino-acid chain; its full sequence is Dihydroorotase (422 aa).

Zn(2+) is bound by residues histidine 59 and histidine 61. Residues 61–63 (HFR) and asparagine 93 each bind substrate. Positions 150, 177, and 230 each coordinate Zn(2+). A substrate-binding site is contributed by asparagine 276. Aspartate 303 serves as a coordination point for Zn(2+). Aspartate 303 is an active-site residue. Substrate is bound at residue histidine 307.

It belongs to the metallo-dependent hydrolases superfamily. DHOase family. Class I DHOase subfamily. The cofactor is Zn(2+).

The catalysed reaction is (S)-dihydroorotate + H2O = N-carbamoyl-L-aspartate + H(+). Its pathway is pyrimidine metabolism; UMP biosynthesis via de novo pathway; (S)-dihydroorotate from bicarbonate: step 3/3. Its function is as follows. Catalyzes the reversible cyclization of carbamoyl aspartate to dihydroorotate. The polypeptide is Dihydroorotase (Streptococcus thermophilus (strain CNRZ 1066)).